The primary structure comprises 189 residues: dCTP deaminase (189 aa).

DCTP-binding positions include 112 to 117, 136 to 138, Q157, Y171, and Q181; these read KSTYAR and TLE. Catalysis depends on E138, which acts as the Proton donor/acceptor.

It belongs to the dCTP deaminase family. Homotrimer.

The enzyme catalyses dCTP + H2O + H(+) = dUTP + NH4(+). It participates in pyrimidine metabolism; dUMP biosynthesis; dUMP from dCTP (dUTP route): step 1/2. In terms of biological role, catalyzes the deamination of dCTP to dUTP. This is dCTP deaminase from Burkholderia thailandensis (strain ATCC 700388 / DSM 13276 / CCUG 48851 / CIP 106301 / E264).